Here is a 315-residue protein sequence, read N- to C-terminus: Putative ankyrin repeat protein R600 (315 aa).

ANK repeat units lie at residues 79–108, 118–152, 153–182, 184–211, and 212–240; these read NECR…NVHV, SGFG…MVGT, DTCN…DIFS, QSKL…DVTD, and DNNS…DMNT.

This Acanthamoeba polyphaga mimivirus (APMV) protein is Putative ankyrin repeat protein R600.